Here is a 156-residue protein sequence, read N- to C-terminus: Small ribosomal subunit protein uS7 (156 aa).

Belongs to the universal ribosomal protein uS7 family. In terms of assembly, part of the 30S ribosomal subunit. Contacts proteins S9 and S11.

Functionally, one of the primary rRNA binding proteins, it binds directly to 16S rRNA where it nucleates assembly of the head domain of the 30S subunit. Is located at the subunit interface close to the decoding center, probably blocks exit of the E-site tRNA. This chain is Small ribosomal subunit protein uS7, found in Synechococcus sp. (strain CC9902).